The chain runs to 284 residues: Tropomyosin (284 aa).

A coiled-coil region spans residues 1-284; the sequence is MDAIKKKMQA…DQTFQELSGY (284 aa). Over residues 110-142 the composition is skewed to basic and acidic residues; that stretch reads TAKLEEATHTADESERVRKVMENRSFQDEERAN. The disordered stretch occupies residues 110 to 143; that stretch reads TAKLEEATHTADESERVRKVMENRSFQDEERANT.

This sequence belongs to the tropomyosin family.

Functionally, tropomyosin, in association with the troponin complex, plays a central role in the calcium dependent regulation of muscle contraction. The sequence is that of Tropomyosin from Anisakis simplex (Herring worm).